Consider the following 874-residue polypeptide: Alanine--tRNA ligase (874 aa).

Zn(2+) is bound by residues His-562, His-566, Cys-664, and His-668.

The protein belongs to the class-II aminoacyl-tRNA synthetase family. The cofactor is Zn(2+).

Its subcellular location is the cytoplasm. The enzyme catalyses tRNA(Ala) + L-alanine + ATP = L-alanyl-tRNA(Ala) + AMP + diphosphate. Functionally, catalyzes the attachment of alanine to tRNA(Ala) in a two-step reaction: alanine is first activated by ATP to form Ala-AMP and then transferred to the acceptor end of tRNA(Ala). Also edits incorrectly charged Ser-tRNA(Ala) and Gly-tRNA(Ala) via its editing domain. The chain is Alanine--tRNA ligase from Shewanella sp. (strain ANA-3).